The primary structure comprises 507 residues: Serine hydroxymethyltransferase (507 aa).

K283 bears the N6-(pyridoxal phosphate)lysine mark.

The protein belongs to the SHMT family. As to quaternary structure, homotetramer. Requires pyridoxal 5'-phosphate as cofactor.

The enzyme catalyses (6R)-5,10-methylene-5,6,7,8-tetrahydrofolate + glycine + H2O = (6S)-5,6,7,8-tetrahydrofolate + L-serine. It participates in one-carbon metabolism; tetrahydrofolate interconversion. Its function is as follows. Interconversion of serine and glycine. In Caenorhabditis elegans, this protein is Serine hydroxymethyltransferase (mel-32).